We begin with the raw amino-acid sequence, 459 residues long: MQKIETFWHFCLKHFRQELNGQQFNTWIKPLKLEVCPDEKNTLILIAPNRFVLQWIKDNFVTRIDEMAQDHFNERISFRLELREPAESEAQTVRTSAQKNREDKKPAAEKTQGVTSRKTNPSQLNASFTFDAFVTGKANQLARAGAIQVAERPGIAYNPLFIYGGVGLGKTHLMQAIGNYVLELDAGAKIRYVHAEKYVSDVVSAYQHKSFDKFKLYYHSLDLLLVDDVQFFSGKNRTQEEFFYAFNALIEAHKQVIITSDCYPKEISGLEERLVSRFGWGLTVAIEPPELEMRVAILLKKALAEKIELDENTAFFIAKYIRSNVRELEGALKRVLAFSRFTGHSISLDLAKEALKDLLAIQNRQISIENIQKTVADYYKIKVADMYSKKRVRTIVRPRQVAMAIAKELTQLSLPDIGEAFGGRDHTTVLHAHRKIIELRTSDPGINRDFNALMHILRG.

Residues 1-74 (MQKIETFWHF…DEMAQDHFNE (74 aa)) are domain I, interacts with DnaA modulators. The interval 74–122 (ERISFRLELREPAESEAQTVRTSAQKNREDKKPAAEKTQGVTSRKTNPS) is domain II. Residues 87-122 (ESEAQTVRTSAQKNREDKKPAAEKTQGVTSRKTNPS) are disordered. Residues 89–98 (EAQTVRTSAQ) are compositionally biased toward polar residues. A compositionally biased stretch (basic and acidic residues) spans 99 to 108 (KNREDKKPAA). Positions 112-122 (QGVTSRKTNPS) are enriched in polar residues. A domain III, AAA+ region region spans residues 123–339 (QLNASFTFDA…GALKRVLAFS (217 aa)). The ATP site is built by Gly-167, Gly-169, Lys-170, and Thr-171. The interval 340 to 459 (RFTGHSISLD…FNALMHILRG (120 aa)) is domain IV, binds dsDNA.

The protein belongs to the DnaA family. As to quaternary structure, oligomerizes as a right-handed, spiral filament on DNA at oriC.

It is found in the cytoplasm. In terms of biological role, plays an essential role in the initiation and regulation of chromosomal replication. ATP-DnaA binds to the origin of replication (oriC) to initiate formation of the DNA replication initiation complex once per cell cycle. Binds the DnaA box (a 9 base pair repeat at the origin) and separates the double-stranded (ds)DNA. Forms a right-handed helical filament on oriC DNA; dsDNA binds to the exterior of the filament while single-stranded (ss)DNA is stabiized in the filament's interior. The ATP-DnaA-oriC complex binds and stabilizes one strand of the AT-rich DNA unwinding element (DUE), permitting loading of DNA polymerase. After initiation quickly degrades to an ADP-DnaA complex that is not apt for DNA replication. Binds acidic phospholipids. In Nitrosomonas europaea (strain ATCC 19718 / CIP 103999 / KCTC 2705 / NBRC 14298), this protein is Chromosomal replication initiator protein DnaA.